Consider the following 84-residue polypeptide: MAVDRPQNLQDTFLNFVRKNKVPLTIFLVNGVKLQGVVTWFDNFCVLLRRDGHSQLVYKHAISTIMPGAPIQMFEPGDEAGHAG.

The region spanning 11 to 71 (DTFLNFVRKN…ISTIMPGAPI (61 aa)) is the Sm domain.

This sequence belongs to the Hfq family. As to quaternary structure, homohexamer.

Functionally, RNA chaperone that binds small regulatory RNA (sRNAs) and mRNAs to facilitate mRNA translational regulation in response to envelope stress, environmental stress and changes in metabolite concentrations. Also binds with high specificity to tRNAs. In Beijerinckia indica subsp. indica (strain ATCC 9039 / DSM 1715 / NCIMB 8712), this protein is RNA-binding protein Hfq.